We begin with the raw amino-acid sequence, 631 residues long: Anthrax toxin receptor-like (631 aa).

The first 27 residues, 1–27 (MGSHESLGPYFLVFLLLLLLPPPLFRA), serve as a signal peptide directing secretion. Residues 28-353 (GSLRYHGPDW…TSTTCGIFRN (326 aa)) are Extracellular-facing. A VWFA domain is found at 76-246 (DLYFILDKSG…KALRSTIDAL (171 aa)). Residues Ser-84, Ser-86, and Thr-150 each contribute to the a divalent metal cation site. A helical transmembrane segment spans residues 354–374 (WLYFVPLLLLVPLLLCCVWRL). Residues 375–631 (CRKQTVKEPP…LSLPPSEPNF (257 aa)) are Cytoplasmic-facing. The interval 382–413 (EPPPVQKPEKEPEQEKPPSPPPPPPPPPPPLP) is disordered. The span at 388–397 (KPEKEPEQEK) shows a compositional bias: basic and acidic residues. Residues 398-413 (PPSPPPPPPPPPPPLP) show a composition bias toward pro residues.

Belongs to the ATR family.

It is found in the membrane. This chain is Anthrax toxin receptor-like (ANTXRL), found in Homo sapiens (Human).